The chain runs to 509 residues: MADRAALEDLVRVQGERVRGLKQQKASAEQIEEEVAKLLKLKAQLGPDEGKPKFVLKTPKGTRDYSPRQMAVREKVFDVIISCFKRHGAEVIDTPVFELKETLTGKYGEDSKLIYDLKDQGGELLSLRYDLTVPFARYLAMNKLTNIKRYHIAKVYRRDNPAMTRGRYREFYQCDFDIAGQFDPMLPDAECLKIMCEILSSLQIGDFLVKVNDRRILDGMFAICGVPDSKFRTICSSVDKLDKVSWEEVKNEMVGEKGLAPEVADRIGDYVQQHGGVSLVEQLLQDPKLSQNKQALEGLGDLKLLFEYLTLFGIADKISFDLSLARGLDYYTGVIYEAVLLQPPARAGEEPLGVGSVAAGGRYDGLVGMFDPKGRKVPCVGLSIGVERIFSIVEQRLEALEEKVRTTETQVLVASAQKKLLEERLKLISELWDAGIKAELLYKKNPKLLNQLQYCEETGIPLVAIIGEQELKDGVIKLRSVASREEVDVRREDLVEEIKRRTSQPLCIC.

Residue Ala2 is modified to N-acetylalanine. Residues 3 to 59 enclose the WHEP-TRS domain; that stretch reads DRAALEDLVRVQGERVRGLKQQKASAEQIEEEVAKLLKLKAQLGPDEGKPKFVLKTP. A Phosphoserine modification is found at Ser66. Residues 130 to 132, Arg157, Gln173, Asp177, Arg326, and 330 to 331 contribute to the L-histidine site; these read DLT and YY. Phosphoserine is present on Ser356.

This sequence belongs to the class-II aminoacyl-tRNA synthetase family. Homodimer.

It localises to the cytoplasm. The enzyme catalyses tRNA(His) + L-histidine + ATP = L-histidyl-tRNA(His) + AMP + diphosphate + H(+). Functionally, catalyzes the ATP-dependent ligation of histidine to the 3'-end of its cognate tRNA, via the formation of an aminoacyl-adenylate intermediate (His-AMP). Plays a role in axon guidance. This Bos taurus (Bovine) protein is Histidine--tRNA ligase, cytoplasmic (HARS1).